Consider the following 552-residue polypeptide: Membrane protein insertase YidC (552 aa).

5 helical membrane passes run 7–24 (VLWV…DNWQ), 364–384 (WGWA…PLSA), 434–454 (LPVV…LASV), 473–493 (PFFI…SLNP), and 508–528 (PIAF…YYVV).

This sequence belongs to the OXA1/ALB3/YidC family. Type 1 subfamily. Interacts with the Sec translocase complex via SecD. Specifically interacts with transmembrane segments of nascent integral membrane proteins during membrane integration.

Its subcellular location is the cell inner membrane. In terms of biological role, required for the insertion and/or proper folding and/or complex formation of integral membrane proteins into the membrane. Involved in integration of membrane proteins that insert both dependently and independently of the Sec translocase complex, as well as at least some lipoproteins. Aids folding of multispanning membrane proteins. This is Membrane protein insertase YidC from Burkholderia cenocepacia (strain HI2424).